We begin with the raw amino-acid sequence, 150 residues long: D-aminoacyl-tRNA deacylase (150 aa).

A Gly-cisPro motif, important for rejection of L-amino acids motif is present at residues 138–139 (GP).

The protein belongs to the DTD family. As to quaternary structure, homodimer.

It localises to the cytoplasm. It carries out the reaction glycyl-tRNA(Ala) + H2O = tRNA(Ala) + glycine + H(+). It catalyses the reaction a D-aminoacyl-tRNA + H2O = a tRNA + a D-alpha-amino acid + H(+). An aminoacyl-tRNA editing enzyme that deacylates mischarged D-aminoacyl-tRNAs. Also deacylates mischarged glycyl-tRNA(Ala), protecting cells against glycine mischarging by AlaRS. Acts via tRNA-based rather than protein-based catalysis; rejects L-amino acids rather than detecting D-amino acids in the active site. By recycling D-aminoacyl-tRNA to D-amino acids and free tRNA molecules, this enzyme counteracts the toxicity associated with the formation of D-aminoacyl-tRNA entities in vivo and helps enforce protein L-homochirality. In Natranaerobius thermophilus (strain ATCC BAA-1301 / DSM 18059 / JW/NM-WN-LF), this protein is D-aminoacyl-tRNA deacylase.